A 239-amino-acid chain; its full sequence is RNA polymerase sigma factor FliA (239 aa).

The sigma-70 factor domain-2 stretch occupies residues 16–88; the sequence is LWQRYVPLVR…MLDELRSRDW (73 aa). Positions 43–46 match the Interaction with polymerase core subunit RpoC motif; sequence DLLQ. Positions 96–166 are sigma-70 factor domain-3; sequence NAREVAQAMG…IELVTEEHQQ (71 aa). Residues 185-233 form a sigma-70 factor domain-4 region; it reads AIESLPEREQLVLTLYYQEELNLKEIGAVLEVGESRVSQLHSQAIKRLR. The segment at residues 207 to 226 is a DNA-binding region (H-T-H motif); that stretch reads LKEIGAVLEVGESRVSQLHS.

This sequence belongs to the sigma-70 factor family. FliA subfamily.

The protein resides in the cytoplasm. Sigma factors are initiation factors that promote the attachment of RNA polymerase to specific initiation sites and are then released. This sigma factor controls the expression of flagella-related genes. In Salmonella typhi, this protein is RNA polymerase sigma factor FliA.